A 501-amino-acid polypeptide reads, in one-letter code: 25-hydroxyvitamin D-1 alpha hydroxylase, mitochondrial (501 aa).

Position 448 (Cys448) interacts with heme.

It belongs to the cytochrome P450 family. It depends on heme as a cofactor. As to expression, kidney.

It localises to the mitochondrion membrane. It carries out the reaction calcidiol + 2 reduced [adrenodoxin] + O2 + 2 H(+) = calcitriol + 2 oxidized [adrenodoxin] + H2O. The enzyme catalyses secalciferol + 2 reduced [adrenodoxin] + O2 + 2 H(+) = calcitetrol + 2 oxidized [adrenodoxin] + H2O. Its pathway is hormone biosynthesis; cholecalciferol biosynthesis. Catalyzes the conversion of 25-hydroxyvitamin D3 (25(OH)D3) to 1-alpha,25-dihydroxyvitamin D3 (1alpha,25(OH)(2)D3), and of 24,25-dihydroxyvitamin D3 (24,25(OH)(2)D3) to 1-alpha,24,25-trihydroxyvitamin D3 (1alpha,24,25(OH)(3)D3). Is also active with 25-hydroxy-24-oxo-vitamin D3. Plays an important role in normal bone growth, calcium metabolism, and tissue differentiation. This Rattus norvegicus (Rat) protein is 25-hydroxyvitamin D-1 alpha hydroxylase, mitochondrial (Cyp27b1).